The following is a 129-amino-acid chain: Protein BEX2 (129 aa).

A disordered region spans residues 1–38; the sequence is MESKVEQGVKNLNMENDHQEKEEKEEKPQDANKREPVV. Residues 15-36 are compositionally biased toward basic and acidic residues; that stretch reads ENDHQEKEEKEEKPQDANKREP. An Omega-N-methylarginine modification is found at Arg51. The interval 108–129 is disordered; sequence SLRAVSTDPPHHDHHDEFCLMP. The span at 116-129 shows a compositional bias: basic and acidic residues; the sequence is PPHHDHHDEFCLMP. Positions 118–122 are his cluster; that stretch reads HHDHH. Cys126 contacts Zn(2+).

This sequence belongs to the BEX family. In terms of assembly, interacts with LMO2, possibly leading to regulate the transcriptional activity of a DNA-binding complex containing LMO2. Interacts with OMP.

The protein resides in the nucleus. It localises to the cytoplasm. Its function is as follows. Regulator of mitochondrial apoptosis and G1 cell cycle. Regulates the level of PP2A regulatory subunit B and PP2A phosphatase activity. In absence of reductive stress, acts as a pseudosubstrate for the CRL2(FEM1B) complex: associates with FEM1B via zinc, thereby preventing association between FEM1B and its substrates. The protein is Protein BEX2 (Bex2) of Rattus norvegicus (Rat).